Here is a 140-residue protein sequence, read N- to C-terminus: ATP synthase epsilon chain (140 aa).

This sequence belongs to the ATPase epsilon chain family. As to quaternary structure, F-type ATPases have 2 components, CF(1) - the catalytic core - and CF(0) - the membrane proton channel. CF(1) has five subunits: alpha(3), beta(3), gamma(1), delta(1), epsilon(1). CF(0) has three main subunits: a, b and c.

Its subcellular location is the cell inner membrane. Its function is as follows. Produces ATP from ADP in the presence of a proton gradient across the membrane. The sequence is that of ATP synthase epsilon chain from Yersinia pseudotuberculosis serotype O:1b (strain IP 31758).